The following is a 239-amino-acid chain: Ribosomal RNA small subunit methyltransferase G (239 aa).

S-adenosyl-L-methionine is bound by residues Gly79, Phe84, 130-131 (AE), and Arg149. The segment at 218–239 (KKTKTPKKYPRQAGTPSKKPIS) is disordered.

Belongs to the methyltransferase superfamily. RNA methyltransferase RsmG family.

The protein resides in the cytoplasm. Specifically methylates the N7 position of a guanine in 16S rRNA. The sequence is that of Ribosomal RNA small subunit methyltransferase G from Leuconostoc mesenteroides subsp. mesenteroides (strain ATCC 8293 / DSM 20343 / BCRC 11652 / CCM 1803 / JCM 6124 / NCDO 523 / NBRC 100496 / NCIMB 8023 / NCTC 12954 / NRRL B-1118 / 37Y).